The following is a 200-amino-acid chain: Holliday junction branch migration complex subunit RuvA (200 aa).

Residues 1–64 form a domain I region; that stretch reads MFAYFKGSLV…EDALQLYGFF (64 aa). The interval 65–143 is domain II; the sequence is KEEERQLFRL…KLPLVTPAAG (79 aa). The tract at residues 143-147 is flexible linker; sequence GKAAM. The segment at 148-200 is domain III; the sequence is PSHHVKDDAVHALVTLGFSRLLAQKAVSALLEEKPEQSVEEVIKYALATIHNS.

It belongs to the RuvA family. Homotetramer. Forms an RuvA(8)-RuvB(12)-Holliday junction (HJ) complex. HJ DNA is sandwiched between 2 RuvA tetramers; dsDNA enters through RuvA and exits via RuvB. An RuvB hexamer assembles on each DNA strand where it exits the tetramer. Each RuvB hexamer is contacted by two RuvA subunits (via domain III) on 2 adjacent RuvB subunits; this complex drives branch migration. In the full resolvosome a probable DNA-RuvA(4)-RuvB(12)-RuvC(2) complex forms which resolves the HJ.

It is found in the cytoplasm. The RuvA-RuvB-RuvC complex processes Holliday junction (HJ) DNA during genetic recombination and DNA repair, while the RuvA-RuvB complex plays an important role in the rescue of blocked DNA replication forks via replication fork reversal (RFR). RuvA specifically binds to HJ cruciform DNA, conferring on it an open structure. The RuvB hexamer acts as an ATP-dependent pump, pulling dsDNA into and through the RuvAB complex. HJ branch migration allows RuvC to scan DNA until it finds its consensus sequence, where it cleaves and resolves the cruciform DNA. This chain is Holliday junction branch migration complex subunit RuvA, found in Chlorobium phaeobacteroides (strain DSM 266 / SMG 266 / 2430).